The following is a 259-amino-acid chain: Imidazole glycerol phosphate synthase subunit HisF (259 aa).

Catalysis depends on residues Asp11 and Asp130.

This sequence belongs to the HisA/HisF family. In terms of assembly, heterodimer of HisH and HisF.

It localises to the cytoplasm. It catalyses the reaction 5-[(5-phospho-1-deoxy-D-ribulos-1-ylimino)methylamino]-1-(5-phospho-beta-D-ribosyl)imidazole-4-carboxamide + L-glutamine = D-erythro-1-(imidazol-4-yl)glycerol 3-phosphate + 5-amino-1-(5-phospho-beta-D-ribosyl)imidazole-4-carboxamide + L-glutamate + H(+). It participates in amino-acid biosynthesis; L-histidine biosynthesis; L-histidine from 5-phospho-alpha-D-ribose 1-diphosphate: step 5/9. In terms of biological role, IGPS catalyzes the conversion of PRFAR and glutamine to IGP, AICAR and glutamate. The HisF subunit catalyzes the cyclization activity that produces IGP and AICAR from PRFAR using the ammonia provided by the HisH subunit. In Solidesulfovibrio magneticus (strain ATCC 700980 / DSM 13731 / RS-1) (Desulfovibrio magneticus), this protein is Imidazole glycerol phosphate synthase subunit HisF.